The primary structure comprises 1362 residues: Insulin receptor (1362 aa).

A signal peptide spans 1–37 (MGQGVLRGEGHPNNNPNSKVGWKSLVGIITIFMLILC). The segment at 38–184 (DQSDGKICYS…DSVEDNYIEL (147 aa)) is leucine-rich region. Cysteine 45 and cysteine 63 are oxidised to a cystine. N-linked (GlcNAc...) asparagine glycans are attached at residues asparagine 53, asparagine 115, and asparagine 148. Intrachain disulfides connect cysteine 163-cysteine 192, cysteine 196-cysteine 219, cysteine 206-cysteine 225, cysteine 229-cysteine 238, cysteine 233-cysteine 244, cysteine 245-cysteine 253, cysteine 249-cysteine 262, cysteine 265-cysteine 274, cysteine 278-cysteine 290, cysteine 296-cysteine 321, cysteine 303-cysteine 311, cysteine 325-cysteine 338, cysteine 341-cysteine 345, and cysteine 349-cysteine 370. Asparagine 332 carries N-linked (GlcNAc...) asparagine glycosylation. Asparagine 374, asparagine 434, and asparagine 455 each carry an N-linked (GlcNAc...) asparagine glycan. Cysteine 472 and cysteine 505 form a disulfide bridge. 2 consecutive Fibronectin type-III domains span residues 508–629 (NLLT…TNET) and 633–730 (VPLD…IQKE). Residues asparagine 551, asparagine 627, asparagine 642, asparagine 660, and asparagine 707 are each glycosylated (N-linked (GlcNAc...) asparagine). Disulfide bonds link cysteine 683–cysteine 896 and cysteine 822–cysteine 830. Positions 694–714 (WTPPTEIDENGNENQTEHTSV) are disordered. The span at 705 to 714 (NENQTEHTSV) shows a compositional bias: polar residues. The interval 741–749 (ENYLHNEVF) is insulin-binding. The Extracellular portion of the chain corresponds to 759-951 (DLFGVANGTL…PDHPHSNIVK (193 aa)). Asparagine 765 and asparagine 779 each carry an N-linked (GlcNAc...) asparagine glycan. Positions 849-944 (VVGPITYEYV…EQAYFQVPDH (96 aa)) constitute a Fibronectin type-III 3 domain. 2 N-linked (GlcNAc...) asparagine glycosylation sites follow: asparagine 917 and asparagine 930. The chain crosses the membrane as a helical span at residues 952–972 (IITGPIIAVFLLLIVLVYCVV). The Cytoplasmic segment spans residues 973 to 1362 (QKKKDAEGPA…ILSLPRSSPS (390 aa)). The residue at position 993 (tyrosine 993) is a Phosphotyrosine; by autocatalysis. The Protein kinase domain occupies 1012-1287 (INLLRELGQG…MLKDDLRPSF (276 aa)). Residues serine 1022, lysine 1046, and 1093–1099 (ELMAHGD) contribute to the ATP site. Aspartate 1148 functions as the Proton donor/acceptor in the catalytic mechanism. Residues 1152-1153 (RN) and aspartate 1166 contribute to the ATP site. A phosphotyrosine; by autocatalysis mark is found at tyrosine 1174, tyrosine 1178, tyrosine 1179, tyrosine 1335, and tyrosine 1341.

It belongs to the protein kinase superfamily. Tyr protein kinase family. Insulin receptor subfamily. Tetramer of 2 alpha and 2 beta chains linked by disulfide bonds. The alpha chains contribute to the formation of the ligand-binding domain, while the beta chains carry the kinase domain. Autophosphorylated on tyrosine residues in response to insulin. In terms of tissue distribution, localized mainly to the envelope in oocytes. Localized to the animal hemisphere during early embryonic cleavage. Expressed during organogenesis in regions of ecto- and mesodermic origins. Expressed in the entire encephalon, the otic and optic vesicles, the gills, the somites and the pronephric tubules of the embryo. Also found in adult liver, muscle and regenerated forelimbs.

It is found in the cell membrane. The enzyme catalyses L-tyrosyl-[protein] + ATP = O-phospho-L-tyrosyl-[protein] + ADP + H(+). Its activity is regulated as follows. Autophosphorylation activates the kinase activity. Functionally, receptor tyrosine kinase which mediates actions of insulin. May be required for forelimb regeneration. In Xenopus laevis (African clawed frog), this protein is Insulin receptor (insr).